Here is a 387-residue protein sequence, read N- to C-terminus: Probable aminomethyltransferase, mitochondrial (387 aa).

Positions 219, 248, and 385 each coordinate substrate.

It belongs to the GcvT family. In terms of assembly, the glycine cleavage system is composed of four proteins: P, T, L and H.

The protein localises to the mitochondrion. The catalysed reaction is N(6)-[(R)-S(8)-aminomethyldihydrolipoyl]-L-lysyl-[protein] + (6S)-5,6,7,8-tetrahydrofolate = N(6)-[(R)-dihydrolipoyl]-L-lysyl-[protein] + (6R)-5,10-methylene-5,6,7,8-tetrahydrofolate + NH4(+). In terms of biological role, the glycine cleavage system catalyzes the degradation of glycine. In Schizosaccharomyces pombe (strain 972 / ATCC 24843) (Fission yeast), this protein is Probable aminomethyltransferase, mitochondrial (gcv1).